Here is a 243-residue protein sequence, read N- to C-terminus: MIIIPARLKSSRFENKMLEDIFGLPMVVRCAKNANLVDECVVACDDESIMKACQKFHIKAVLTSKHHNSGTERCLEAAQILGLKNDERVLNLQGDEPFLEKKVILALLEATQNAPFMATCAKVIDEEQAKSPNLVKVVLDSQNNALYFSRSLIPFLRDFDAKRQTPLLGHIGIYGFHNKEILEELCALKPCVLEDTEKLEQLRALYYQKKILVKIVQSESMGIDTKEDLQNALKIFSPNLLKR.

This sequence belongs to the KdsB family.

The protein resides in the cytoplasm. The enzyme catalyses 3-deoxy-alpha-D-manno-oct-2-ulosonate + CTP = CMP-3-deoxy-beta-D-manno-octulosonate + diphosphate. It functions in the pathway nucleotide-sugar biosynthesis; CMP-3-deoxy-D-manno-octulosonate biosynthesis; CMP-3-deoxy-D-manno-octulosonate from 3-deoxy-D-manno-octulosonate and CTP: step 1/1. The protein operates within bacterial outer membrane biogenesis; lipopolysaccharide biosynthesis. Its function is as follows. Activates KDO (a required 8-carbon sugar) for incorporation into bacterial lipopolysaccharide in Gram-negative bacteria. The polypeptide is 3-deoxy-manno-octulosonate cytidylyltransferase (Helicobacter pylori (strain J99 / ATCC 700824) (Campylobacter pylori J99)).